A 513-amino-acid polypeptide reads, in one-letter code: MPSSPGNRQHSLRSACERCRLHKLKCTILPQKRFEGPQEAPEQCTRCARAKAKCVFGRRAPPKHRASSSNDRSSVSKGINSTTPATRTMQPNATGFVSSHRIELPPSPASNQSSLKHSSVWDNLLDKTTPQEPRADFSSFSYPPVPFDLQSMCLDEVDMAASALPTTEPNFSSAQREHEFSAMSMSPGLGYDNLDELLALNEQPNISDASSPLLSETDPSHGMIRLSSLLKEIHETQHNLQERSFSCTTSRGLAGYPIGRVLHAAQTFSSMVTNLMRPRVVQTSHTDVQGFNPSLYSSSPESTELPSLHQEFVSSLEQMKTNALEQSRRLGEDDLDKYASPCSSTTSLQDTMLDMPIVMLVFCCFASLSKLYCSVFRFFEKSLHSQSCRAKDSTYVPPLQDTRTLQLGELSIENDTEFKVLKALRMLLDAFQAAEASLGLPSSLTVLNSNKSTISASAEPAVSDTGSLQHHLRHSLIKQCVTFDDRHLERTLTSLVTHVENLKQLLRVQNGLH.

A DNA-binding region (zn(2)-C6 fungal-type) is located at residues 16–54 (CERCRLHKLKCTILPQKRFEGPQEAPEQCTRCARAKAKC). 2 disordered regions span residues 58-92 (RRAP…MQPN) and 97-116 (VSSH…SSLK). Residues 67–76 (SSSNDRSSVS) show a composition bias toward low complexity. Residues 77–92 (KGINSTTPATRTMQPN) are compositionally biased toward polar residues.

The protein localises to the nucleus. Functionally, transcription factor that regulates the expression of the gene cluster that mediates the biosynthesis of varicidin A, an antifungal natural product containing a cis-octahydrodecalin core. This chain is Varicidin biosynthesis cluster-specific transcription factor, found in Talaromyces variabilis (Penicillium variabile).